We begin with the raw amino-acid sequence, 503 residues long: Putative ribose/galactose/methyl galactoside import ATP-binding protein (503 aa).

ABC transporter domains are found at residues 7–244 and 254–498; these read LEMI…VGRE and VPIG…TGQL. Residue 39-46 coordinates ATP; the sequence is GENGAGKS.

This sequence belongs to the ABC transporter superfamily. Carbohydrate importer 2 (CUT2) (TC 3.A.1.2) family.

The protein localises to the cell membrane. It carries out the reaction D-ribose(out) + ATP + H2O = D-ribose(in) + ADP + phosphate + H(+). The catalysed reaction is D-galactose(out) + ATP + H2O = D-galactose(in) + ADP + phosphate + H(+). Its function is as follows. Part of an ABC transporter complex involved in carbohydrate import. Could be involved in ribose, galactose and/or methyl galactoside import. Responsible for energy coupling to the transport system. This Geobacillus kaustophilus (strain HTA426) protein is Putative ribose/galactose/methyl galactoside import ATP-binding protein.